The following is a 70-amino-acid chain: Mu-conotoxin-like Am3.4 (70 aa).

The signal sequence occupies residues 1 to 20 (MMYKLGVLLIICLLLFPLTA). A propeptide spanning residues 21–53 (VPQDGDQPADRPAERMQDDISFEHDRFFDPVKR) is cleaved from the precursor. Intrachain disulfides connect C54-C69, C55-C65, and C61-C68. At P67 the chain carries 4-hydroxyproline; partial; in major form. C69 is subject to Cysteine amide.

Belongs to the conotoxin M superfamily. In terms of processing, contains 3 disulfide bonds. As to expression, expressed by the venom duct.

Its subcellular location is the secreted. Mu-conotoxins block voltage-gated sodium channels (Nav). This chain is Mu-conotoxin-like Am3.4, found in Conus amadis (Amadis cone).